Reading from the N-terminus, the 1447-residue chain is DNA-directed RNA polymerase subunit beta' (1447 aa).

Zn(2+)-binding residues include Cys-70, Cys-72, Cys-85, and Cys-88. Mg(2+) contacts are provided by Asp-460, Asp-462, and Asp-464. Zn(2+) is bound by residues Cys-890, Cys-964, Cys-971, and Cys-974.

The protein belongs to the RNA polymerase beta' chain family. As to quaternary structure, the RNAP catalytic core consists of 2 alpha, 1 beta, 1 beta' and 1 omega subunit. When a sigma factor is associated with the core the holoenzyme is formed, which can initiate transcription. Mg(2+) serves as cofactor. Zn(2+) is required as a cofactor.

It carries out the reaction RNA(n) + a ribonucleoside 5'-triphosphate = RNA(n+1) + diphosphate. DNA-dependent RNA polymerase catalyzes the transcription of DNA into RNA using the four ribonucleoside triphosphates as substrates. The polypeptide is DNA-directed RNA polymerase subunit beta' (Desulfosudis oleivorans (strain DSM 6200 / JCM 39069 / Hxd3) (Desulfococcus oleovorans)).